Consider the following 83-residue polypeptide: Small integral membrane protein 10 (83 aa).

The helical transmembrane segment at 64–82 (FFYFYILASVILNVHLQVY) threads the bilayer.

It localises to the membrane. The protein is Small integral membrane protein 10 (SMIM10) of Homo sapiens (Human).